The chain runs to 128 residues: Sulfurtransferase TusD (128 aa).

C78 (cysteine persulfide intermediate) is an active-site residue.

This sequence belongs to the DsrE/TusD family. In terms of assembly, heterohexamer, formed by a dimer of trimers. The hexameric TusBCD complex contains 2 copies each of TusB, TusC and TusD. The TusBCD complex interacts with TusE.

The protein localises to the cytoplasm. Its function is as follows. Part of a sulfur-relay system required for 2-thiolation of 5-methylaminomethyl-2-thiouridine (mnm(5)s(2)U) at tRNA wobble positions. Accepts sulfur from TusA and transfers it in turn to TusE. The protein is Sulfurtransferase TusD of Escherichia coli O157:H7.